The primary structure comprises 138 residues: UPF0201 protein TK1335 (138 aa).

Belongs to the UPF0201 family.

This is UPF0201 protein TK1335 from Thermococcus kodakarensis (strain ATCC BAA-918 / JCM 12380 / KOD1) (Pyrococcus kodakaraensis (strain KOD1)).